Here is a 201-residue protein sequence, read N- to C-terminus: Guanylyl cyclase-activating protein 1 (201 aa).

Residue Gly2 is the site of N-myristoyl glycine attachment. Position 3 is a deamidated asparagine (Asn3). 4 consecutive EF-hand domains span residues 31 to 49, 51 to 86, 87 to 122, and 131 to 166; these read SGQLTLYEFRQFFGLKNLS, SASQYVEQMFETFDFNKDGYIDFMEYVAALSLVLKG, KVEQKLRWYFKLYDVDGNGCIDRDELLTIIQAIRAI, and TAEEFTDTVFSKIDVNGDGELSLEEFIEGVQKDQML. Ca(2+)-binding residues include Asp64, Asn66, Asp68, Tyr70, Glu75, Asp100, Asp102, Asn104, Cys106, Glu111, Asp144, Asn146, Asp148, Glu150, and Glu155.

Homodimer. In terms of tissue distribution, in the retina, it is expressed in rod and cone photoreceptors.

The protein localises to the membrane. The protein resides in the photoreceptor inner segment. Its subcellular location is the cell projection. It is found in the cilium. It localises to the photoreceptor outer segment. In terms of biological role, stimulates retinal guanylyl cyclase when free calcium ions concentration is low and inhibits guanylyl cyclase when free calcium ions concentration is elevated. This Ca(2+)-sensitive regulation of retinal guanylyl cyclase is a key event in recovery of the dark state of rod photoreceptors following light exposure. May be involved in cone photoreceptor light response and recovery of response in bright light. The sequence is that of Guanylyl cyclase-activating protein 1 (GUCA1A) from Homo sapiens (Human).